The chain runs to 362 residues: Histidinol-phosphate aminotransferase (362 aa).

K220 is subject to N6-(pyridoxal phosphate)lysine.

This sequence belongs to the class-II pyridoxal-phosphate-dependent aminotransferase family. Histidinol-phosphate aminotransferase subfamily. Homodimer. Pyridoxal 5'-phosphate is required as a cofactor.

It catalyses the reaction L-histidinol phosphate + 2-oxoglutarate = 3-(imidazol-4-yl)-2-oxopropyl phosphate + L-glutamate. Its pathway is amino-acid biosynthesis; L-histidine biosynthesis; L-histidine from 5-phospho-alpha-D-ribose 1-diphosphate: step 7/9. This chain is Histidinol-phosphate aminotransferase, found in Rhodospirillum centenum (strain ATCC 51521 / SW).